The following is a 647-amino-acid chain: Centrosomal protein of 72 kDa (647 aa).

LRR repeat units lie at residues 29 to 50 (ELQS…GHSL), 55 to 76 (GLKS…QYLT), and 77 to 98 (ALES…FRLH). The LRRCT domain occupies 111-150 (NPVVKVEPDYRLFVVHLLPKLQQLDDRPVRASERKASRLH). Composition is skewed to basic and acidic residues over residues 152 to 161 (ASEDSLDSKE) and 220 to 234 (KGRE…ESRH). Disordered regions lie at residues 152–176 (ASED…HHPR), 211–256 (PPGS…RETR), and 285–413 (PEAS…ALPG). At serine 237 the chain carries Phosphoserine. The segment covering 366–377 (SLSRQDSSESRN) has biased composition (basic and acidic residues). Serine 382 bears the Phosphoserine mark. The segment covering 390–402 (EEQRSRGVTDTRE) has biased composition (basic and acidic residues). Residue serine 404 is modified to Phosphoserine. Residues 476-620 (SLALESKSLQ…AQHRAEVEQM (145 aa)) adopt a coiled-coil conformation.

Belongs to the CEP72 family. As to quaternary structure, interacts with KIZ, PCM1 and CDK5RAP2.

The protein resides in the cytoplasm. The protein localises to the cytoskeleton. It is found in the microtubule organizing center. Its subcellular location is the centrosome. It localises to the centriolar satellite. Its function is as follows. Involved in the recruitment of key centrosomal proteins to the centrosome. Provides centrosomal microtubule-nucleation activity on the gamma-tubulin ring complexes (gamma-TuRCs) and has critical roles in forming a focused bipolar spindle, which is needed for proper tension generation between sister chromatids. Required for localization of KIZ, AKAP9 and gamma-tubulin ring complexes (gamma-TuRCs). Involved in centriole duplication. Required for CDK5RAP22, CEP152, WDR62 and CEP63 centrosomal localization and promotes the centrosomal localization of CDK2. This chain is Centrosomal protein of 72 kDa (CEP72), found in Homo sapiens (Human).